We begin with the raw amino-acid sequence, 114 residues long: MDLKFRCLIKNVADGRAGEIIVEECLEIIEQKYLRLMTIDLKEIRSSMFDQESNPWVYVFGKIYISGLMGRAIGKRMVKRGTYRIKEGELINHFEGVHIHFYKDIEKIFHSIRV.

The chain is Protein gamma (gamma) from Bovine ephemeral fever virus (strain BB7721) (BEFV).